The primary structure comprises 411 residues: Receptor GIN3 (411 aa).

Residues 1–99 (MSGFVAGEEA…LLPILPHPRN (99 aa)) lie on the Extracellular side of the membrane. A helical membrane pass occupies residues 100–120 (IPIIVPLFCVFTVMTSLAVGL). At 121 to 134 (RLWSRQKVAGGIRS) the chain is on the cytoplasmic side. The chain crosses the membrane as a helical span at residues 135-155 (FDWLALAGFGLTIIYGAVSVY). Residues 156 to 181 (HSKVSGPYQAFYDRTWDQMKENYKVY) are Extracellular-facing. The helical transmembrane segment at 182–202 (LVLTIMYPFIMGLIKISLLLF) threads the bilayer. The Cytoplasmic portion of the chain corresponds to 203 to 227 (YYRVATLNYVQWAVYATGSLTIANS). The helical transmembrane segment at 228–248 (IAAIITHCLAFMPIDFWNHFL) threads the bilayer. Residues 249-262 (QSPFKFNSRTPMLV) are Extracellular-facing. A helical membrane pass occupies residues 263 to 283 (FGAVYILTDVAILIIPMPMVF). Topologically, residues 284–292 (QLKLYPREK) are cytoplasmic. Residues 293–313 (VIAVIAFSLGGVACVASGFRI) traverse the membrane as a helical segment. Topologically, residues 314 to 328 (WAIDEFQNYSGKNSS) are extracellular. 2 N-linked (GlcNAc...) asparagine glycosylation sites follow: Asn321 and Asn326. The chain crosses the membrane as a helical span at residues 329–349 (GLMIDAWTMIELNLTLICASA). Over 350–411 (PAIRALAIHY…QSPVIPKEVV (62 aa)) the chain is Cytoplasmic. The segment at 371–411 (FSSSGATRGSKSAGSSGKSKTPESEKSMQVSQSPVIPKEVV) is disordered. Low complexity predominate over residues 372–389 (SSSGATRGSKSAGSSGKS).

The protein belongs to the SAT4 family. As to quaternary structure, interacts with guanine nucleotide-binding protein alpha GPA2; to activate adenylate cyclase and positively regulate nematode trap formation.

It localises to the cell membrane. Receptor that senses nematode-derived signals at the cell surface and signals via adenylate cyclase to positively regulate trap formation for nematode capture. This chain is Receptor GIN3, found in Arthrobotrys oligospora (strain ATCC 24927 / CBS 115.81 / DSM 1491) (Nematode-trapping fungus).